The sequence spans 343 residues: Nicotianamine synthase 3 (343 aa).

It belongs to the nicotianamine synthase (NAS)-like family. Expressed in leaves.

It carries out the reaction 3 S-adenosyl-L-methionine = nicotianamine + 3 S-methyl-5'-thioadenosine + 3 H(+). Synthesizes nicotianamine, a polyamine that is the first intermediate in the synthesis of the phytosiderophores of the mugineic acid type found in gramineae which serve as a sensor for the physiological iron status within the plant, and/or might be involved in the transport of iron. The sequence is that of Nicotianamine synthase 3 (NAS3) from Oryza sativa subsp. indica (Rice).